The sequence spans 791 residues: Endonuclease MutS2 (791 aa).

An ATP-binding site is contributed by 339–346 (GPNTGGKT). Residues 715–790 (LDLRGERYET…GSGVTIADLK (76 aa)) form the Smr domain.

Belongs to the DNA mismatch repair MutS family. MutS2 subfamily. As to quaternary structure, homodimer. Binds to stalled ribosomes, contacting rRNA.

Functionally, endonuclease that is involved in the suppression of homologous recombination and thus may have a key role in the control of bacterial genetic diversity. Acts as a ribosome collision sensor, splitting the ribosome into its 2 subunits. Detects stalled/collided 70S ribosomes which it binds and splits by an ATP-hydrolysis driven conformational change. Acts upstream of the ribosome quality control system (RQC), a ribosome-associated complex that mediates the extraction of incompletely synthesized nascent chains from stalled ribosomes and their subsequent degradation. Probably generates substrates for RQC. In Halothermothrix orenii (strain H 168 / OCM 544 / DSM 9562), this protein is Endonuclease MutS2.